A 276-amino-acid polypeptide reads, in one-letter code: Large ribosomal subunit protein uL2c (276 aa).

The segment at 225 to 256 (NPVDHPHGGGEGRSPIGRPKPVSPWGKTALGA) is disordered.

This sequence belongs to the universal ribosomal protein uL2 family. In terms of assembly, part of the 50S ribosomal subunit.

It is found in the plastid. Its subcellular location is the chloroplast. This is Large ribosomal subunit protein uL2c (rpl2) from Mesostigma viride (Green alga).